Reading from the N-terminus, the 511-residue chain is Cytochrome P450 26B1 (511 aa).

Position 440 (Cys-440) interacts with heme.

It belongs to the cytochrome P450 family. The cofactor is heme.

Its subcellular location is the endoplasmic reticulum membrane. The protein resides in the microsome membrane. The enzyme catalyses all-trans-retinoate + reduced [NADPH--hemoprotein reductase] + O2 = all-trans-4-hydroxyretinoate + oxidized [NADPH--hemoprotein reductase] + H2O + H(+). The catalysed reaction is all-trans-retinoate + reduced [NADPH--hemoprotein reductase] + O2 = all-trans-18-hydroxyretinoate + oxidized [NADPH--hemoprotein reductase] + H2O + H(+). A cytochrome P450 monooxygenase involved in the metabolism of retinoates (RAs), the active metabolites of vitamin A, and critical signaling molecules in animals. RAs exist as at least four different isomers: all-trans-RA (atRA), 9-cis-RA, 13-cis-RA, and 9,13-dicis-RA, where atRA is considered to be the biologically active isomer, although 9-cis-RA and 13-cis-RA also have activity. Catalyzes the hydroxylation of atRA primarily at C-4 and C-18, thereby contributing to the regulation of atRA homeostasis and signaling. Hydroxylation of atRA limits its biological activity and initiates a degradative process leading to its eventual elimination. Involved in the convertion of atRA to all-trans-4-oxo-RA. Can oxidize all-trans-13,14-dihydroretinoate (DRA) to metabolites which could include all-trans-4-oxo-DRA, all-trans-4-hydroxy-DRA, all-trans-5,8-epoxy-DRA, and all-trans-18-hydroxy-DRA. This Xenopus tropicalis (Western clawed frog) protein is Cytochrome P450 26B1 (cyp26b1).